The sequence spans 204 residues: Prephenate decarboxylase (204 aa).

This sequence belongs to the prephenate decarboxylase family.

It localises to the cytoplasm. The catalysed reaction is prephenate + H(+) = 3-[(4R)-4-hydroxycyclohexa-1,5-dien-1-yl]-2-oxopropanoate + CO2. It participates in antibiotic biosynthesis; bacilysin biosynthesis. Functionally, part of the bacABCDEF operon responsible for the biosynthesis of the nonribosomally synthesized dipeptide antibiotic bacilysin, composed of L-alanine and L-anticapsin. Bacilysin is an irreversible inactivator of the glutaminase domain of glucosamine synthetase. BacA is an unusual prephenate decarboxylase that avoids the typical aromatization of the cyclohexadienol ring of prephenate. BacA catalyzes the protonation of prephenate (1-carboxy-4-hydroxy-alpha-oxo-2,5-cyclohexadiene-1-propanoic acid) at C6 position, followed by a decarboxylation to produce the endocyclic-delta(4),delta(8)-7R-dihydro-hydroxyphenylpyruvate (en-H2HPP). En-H2HPP is able to undergo a slow nonenzymatic isomerization to produce the exocyclic-delta(3),delta(5)-dihydro-hydroxyphenylpyruvate (ex-H2HPP). BacA isomerizes only the pro-R double bond in prephenate. The chain is Prephenate decarboxylase from Bacillus subtilis (strain 168).